Reading from the N-terminus, the 397-residue chain is Tryptophan synthase beta chain (397 aa).

Lysine 88 carries the N6-(pyridoxal phosphate)lysine modification.

This sequence belongs to the TrpB family. Tetramer of two alpha and two beta chains. Pyridoxal 5'-phosphate serves as cofactor.

The enzyme catalyses (1S,2R)-1-C-(indol-3-yl)glycerol 3-phosphate + L-serine = D-glyceraldehyde 3-phosphate + L-tryptophan + H2O. Its pathway is amino-acid biosynthesis; L-tryptophan biosynthesis; L-tryptophan from chorismate: step 5/5. The beta subunit is responsible for the synthesis of L-tryptophan from indole and L-serine. The sequence is that of Tryptophan synthase beta chain from Haemophilus influenzae (strain 86-028NP).